The sequence spans 468 residues: UDP-N-acetylmuramate--L-alanine ligase (468 aa).

Residue 114–120 (GTHGKTT) coordinates ATP.

This sequence belongs to the MurCDEF family.

The protein resides in the cytoplasm. The catalysed reaction is UDP-N-acetyl-alpha-D-muramate + L-alanine + ATP = UDP-N-acetyl-alpha-D-muramoyl-L-alanine + ADP + phosphate + H(+). It participates in cell wall biogenesis; peptidoglycan biosynthesis. Its function is as follows. Cell wall formation. This Rhodopseudomonas palustris (strain HaA2) protein is UDP-N-acetylmuramate--L-alanine ligase.